The chain runs to 282 residues: MSSYANHQALAGLTLGKSTDYRDTYDASLLQGVPRSLNRDPLGLKADNLPFHGADIWTLYELSWLNAKGLPQVAVGHVELDYTSVNLIESKSFKLYLNSFNQTSFNNWDEVLKTLERDLSTCAQGKVSVALYRLDELEGQPIGHFNGTCIDDQDITIDNYEFTTDYLENATCGEKVVEETLVSHLLKSNCLITHQPDWGSIQIQYRGRQIDREKLLRYLVSFRHHNEFHEQCVERIFNDLLRFCQPEKLSVYARYTRRGGLDINPWRSNSDFVPSTTRLVRQ.

A substrate-binding site is contributed by 88–90 (IES). 90–91 (SK) lines the NADPH pocket. Cys190 serves as the catalytic Thioimide intermediate. Asp197 functions as the Proton donor in the catalytic mechanism. A substrate-binding site is contributed by 229–230 (HE). 258–259 (RG) is an NADPH binding site.

It belongs to the GTP cyclohydrolase I family. QueF type 2 subfamily. Homodimer.

It is found in the cytoplasm. The enzyme catalyses 7-aminomethyl-7-carbaguanine + 2 NADP(+) = 7-cyano-7-deazaguanine + 2 NADPH + 3 H(+). It participates in tRNA modification; tRNA-queuosine biosynthesis. In terms of biological role, catalyzes the NADPH-dependent reduction of 7-cyano-7-deazaguanine (preQ0) to 7-aminomethyl-7-deazaguanine (preQ1). This Shigella dysenteriae serotype 1 (strain Sd197) protein is NADPH-dependent 7-cyano-7-deazaguanine reductase.